A 514-amino-acid polypeptide reads, in one-letter code: Voltage-gated potassium channel regulatory subunit KCNG1 (514 aa).

The Cytoplasmic segment spans residues 1–224 (MTLLPGDNSD…DMVEKPHSGL (224 aa)). Residues 181-196 (EREDEEEALDSEDQES) are compositionally biased toward acidic residues. The segment at 181–205 (EREDEEEALDSEDQESEGPSTSEGR) is disordered. A helical transmembrane segment spans residues 225-246 (PGKVFACLSVLFVTVTAVNLSV). The Extracellular segment spans residues 247 to 267 (STLPSLREEEEQGQCSQMCHN). A helical transmembrane segment spans residues 268 to 289 (VFIVESVCVGWFSLEFLLRFIQ). At 290–300 (APSKFAFLRSP) the chain is on the cytoplasmic side. The helical transmembrane segment at 301–321 (LTLIDLVAILPYYVTLLVDGA) threads the bilayer. The Extracellular portion of the chain corresponds to 322–338 (ASSRRKPSTGNSYLDKV). Residues 339–359 (GLVLRVLRALRILYVMRLARH) form a helical; Voltage-sensor membrane-spanning segment. Topologically, residues 360–374 (SLGLQTLGLTARRCT) are cytoplasmic. Residues 375–396 (REFGLLLLFLCVAIALFAPLLY) form a helical membrane-spanning segment. Residues 397 to 411 (VIENEMADSPEFTSI) are Extracellular-facing. Residues 412–423 (PACYWWAVITMT) constitute an intramembrane region (helical). The Selectivity filter motif lies at 424–429 (TVGYGD). The stretch at 424–431 (TVGYGDMV) is an intramembrane region. Topologically, residues 432–438 (PRSTPGQ) are extracellular. A helical membrane pass occupies residues 439 to 467 (VVALSSILSGILLMAFPVTSIFHTFSRSY). At 468–514 (LELKQEQERVLIRRAQYLIKTKSQLSGMSQDSDILFGSASSDTRDNN) the chain is on the cytoplasmic side.

Belongs to the potassium channel family. G (TC 1.A.1.2) subfamily. Kv6.1/KCNG1 sub-subfamily. Heterotetramer with KCNB1 or KCNB2.

Its subcellular location is the cell membrane. Its function is as follows. Regulatory alpha-subunit of the voltage-gated potassium (Kv) channel which, when coassembled with KCNB1 or KCNB2, can modulate their expression and their gating kinetics by acting on deactivation upon repolarization and inactivation during maintained depolarization. Potassium channel subunit that does not form functional channels by itself. This Rattus norvegicus (Rat) protein is Voltage-gated potassium channel regulatory subunit KCNG1.